Here is a 201-residue protein sequence, read N- to C-terminus: uncharacterized protein (201 aa).

The disordered stretch occupies residues Pro53–Thr74. The segment covering His59–Thr74 has biased composition (polar residues). The bHLH domain occupies Ala88–Leu136.

It localises to the nucleus. This is an uncharacterized protein from Schizosaccharomyces pombe (strain 972 / ATCC 24843) (Fission yeast).